The following is a 381-amino-acid chain: Cytochrome b (381 aa).

The next 4 membrane-spanning stretches (helical) occupy residues 33–53 (FGSL…FLAM), 77–98 (WLLR…FLHV), 113–133 (WNIG…GYVL), and 178–198 (FFAF…VHLL). Heme b-binding residues include His-83 and His-97. Heme b-binding residues include His-182 and His-196. His-201 serves as a coordination point for a ubiquinone. The next 4 membrane-spanning stretches (helical) occupy residues 226–246 (IKDA…GLFS), 288–308 (LGGV…PLLH), 320–340 (IFQT…WIGG), and 347–367 (FIII…ALMP).

This sequence belongs to the cytochrome b family. The cytochrome bc1 complex contains 11 subunits: 3 respiratory subunits (MT-CYB, CYC1 and UQCRFS1), 2 core proteins (UQCRC1 and UQCRC2) and 6 low-molecular weight proteins (UQCRH/QCR6, UQCRB/QCR7, UQCRQ/QCR8, UQCR10/QCR9, UQCR11/QCR10 and a cleavage product of UQCRFS1). This cytochrome bc1 complex then forms a dimer. Heme b serves as cofactor.

Its subcellular location is the mitochondrion inner membrane. Functionally, component of the ubiquinol-cytochrome c reductase complex (complex III or cytochrome b-c1 complex) that is part of the mitochondrial respiratory chain. The b-c1 complex mediates electron transfer from ubiquinol to cytochrome c. Contributes to the generation of a proton gradient across the mitochondrial membrane that is then used for ATP synthesis. The sequence is that of Cytochrome b (MT-CYB) from Dasykaluta rosamondae (Little red marsupial mouse).